The primary structure comprises 1077 residues: Hemoglobin and hemoglobin-haptoglobin-binding protein A (1077 aa).

The N-terminal stretch at 1-24 (MTNFRLNVLAYSVMLGLTASVAYA) is a signal peptide. The segment at 25–72 (EPTNQPTNQPTNQPTNQPTNQPTNQPTNQPTNQPTNQPTNQPTNQNSN) is disordered. 11 repeat units span residues 26 to 29 (PTNQ), 30 to 33 (PTNQ), 34 to 37 (PTNQ), 38 to 41 (PTNQ), 42 to 45 (PTNQ), 46 to 49 (PTNQ), 50 to 53 (PTNQ), 54 to 57 (PTNQ), 58 to 61 (PTNQ), 62 to 65 (PTNQ), and 66 to 69 (PTNQ). The segment at 26-69 (PTNQPTNQPTNQPTNQPTNQPTNQPTNQPTNQPTNQPTNQPTNQ) is 11 X 4 AA tandem repeats of P-T-N-Q. The span at 26–70 (PTNQPTNQPTNQPTNQPTNQPTNQPTNQPTNQPTNQPTNQPTNQN) shows a compositional bias: low complexity. The TonB box signature appears at 78–85 (EQINVSGS). Residues 89–216 (TDTKAPPKIA…LGGSVSLDTK (128 aa)) enclose the TBDR plug domain. The TBDR beta-barrel domain occupies 224–1077 (NKNYYASYKR…NYRMSVQFEF (854 aa)). The TonB C-terminal box motif lies at 1060-1077 (NRFYAPERNYRMSVQFEF).

Belongs to the TonB-dependent receptor family. Hemoglobin/haptoglobin binding protein subfamily.

It localises to the cell outer membrane. Acts as a receptor for hemoglobin or the hemoglobin/haptoglobin complex of the human host and is required for heme uptake. The chain is Hemoglobin and hemoglobin-haptoglobin-binding protein A (hgpA) from Haemophilus influenzae.